Reading from the N-terminus, the 159-residue chain is MAIEGLMKQGFVTTSLNNVINWARTGSLWPMTFGLACCAVEMMEAGSSRYDLDRFGIVFRPTPRQSDLMIVAGTLTNKMAPALRKVYDQMPEPRWVISMGSCANGGGYYHYSYAVVRGCDRIVPVDIYVPGCPPTAEALLYGIIQLQDKIRSTNTIART.

4 residues coordinate [4Fe-4S] cluster: cysteine 37, cysteine 38, cysteine 102, and cysteine 132.

This sequence belongs to the complex I 20 kDa subunit family. NDH-1 is composed of 14 different subunits. Subunits NuoB, C, D, E, F, and G constitute the peripheral sector of the complex. Requires [4Fe-4S] cluster as cofactor.

The protein resides in the cell inner membrane. The enzyme catalyses a quinone + NADH + 5 H(+)(in) = a quinol + NAD(+) + 4 H(+)(out). Functionally, NDH-1 shuttles electrons from NADH, via FMN and iron-sulfur (Fe-S) centers, to quinones in the respiratory chain. Couples the redox reaction to proton translocation (for every two electrons transferred, four hydrogen ions are translocated across the cytoplasmic membrane), and thus conserves the redox energy in a proton gradient. The chain is NADH-quinone oxidoreductase subunit B from Ruthia magnifica subsp. Calyptogena magnifica.